Consider the following 485-residue polypeptide: Probable L-xylulose kinase (485 aa).

It belongs to the FGGY kinase family. As to quaternary structure, homodimer.

The catalysed reaction is L-xylulose + ATP = L-xylulose 5-phosphate + ADP + H(+). This Haemophilus influenzae (strain ATCC 51907 / DSM 11121 / KW20 / Rd) protein is Probable L-xylulose kinase (lyx).